Here is a 408-residue protein sequence, read N- to C-terminus: Serine/threonine transporter SstT (408 aa).

9 helical membrane-spanning segments follow: residues 19 to 39 (SLVSQIIVAIILASLLAVISP), 48 to 68 (LGSLFVNALKAVAPILVLVLV), 86 to 106 (IVGLYFLGTLSAALVAVLLSF), 143 to 163 (VTAVASGNFIAVLAWGLGLGF), 193 to 213 (FAPLGIFGLVANTIATTGFSA), 223 to 243 (VLLSAMLIIALLVNPLIVFII), 294 to 314 (IPLGATINMAGAAITITVLTL), 322 to 342 (IEVSFATAILLSVVASISACG), and 367 to 387 (VAMQVVAIGFIIGVIQDSAET).

Belongs to the dicarboxylate/amino acid:cation symporter (DAACS) (TC 2.A.23) family.

Its subcellular location is the cell inner membrane. It carries out the reaction L-serine(in) + Na(+)(in) = L-serine(out) + Na(+)(out). It catalyses the reaction L-threonine(in) + Na(+)(in) = L-threonine(out) + Na(+)(out). Its function is as follows. Involved in the import of serine and threonine into the cell, with the concomitant import of sodium (symport system). This Colwellia psychrerythraea (strain 34H / ATCC BAA-681) (Vibrio psychroerythus) protein is Serine/threonine transporter SstT.